The sequence spans 66 residues: Large ribosomal subunit protein uL29 (66 aa).

The protein belongs to the universal ribosomal protein uL29 family.

In Allorhizobium ampelinum (strain ATCC BAA-846 / DSM 112012 / S4) (Agrobacterium vitis (strain S4)), this protein is Large ribosomal subunit protein uL29.